The chain runs to 461 residues: General transcription and DNA repair factor IIH subunit SSL1 (461 aa).

The tract at residues 1–70 (MAPVVISESE…RLSNRNLQGS (70 aa)) is disordered. The span at 26–37 (VHFDGEGDDRVD) shows a compositional bias: basic and acidic residues. The segment covering 53–63 (HVQRKKKKRLS) has biased composition (basic residues). Residues 125 to 304 (SLILTLDCSE…THLKELFNEA (180 aa)) enclose the VWFA domain. Residues 349 to 366 (CPNCHSKVCSLPTVCPCC) form a C4-type zinc finger.

The protein belongs to the GTF2H2 family. Component of the 7-subunit TFIIH core complex composed of XPB/SSL2, XPD/RAD3, SSL1, TFB1, TFB2, TFB4 and TFB5, which is active in NER. The core complex associates with the 3-subunit CTD-kinase module TFIIK composed of CCL1, KIN28 and TFB3 to form the 10-subunit holoenzyme (holo-TFIIH) active in transcription. An additionnal subunit, TFB6, plays a role in the dissociation of the SSL2 helicase from TFIIH after transcription initiation.

The protein localises to the nucleus. Its function is as follows. Component of the general transcription and DNA repair factor IIH (TFIIH) core complex, which is involved in general and transcription-coupled nucleotide excision repair (NER) of damaged DNA and, when complexed to TFIIK, in RNA transcription by RNA polymerase II. In NER, TFIIH acts by opening DNA around the lesion to allow the excision of the damaged oligonucleotide and its replacement by a new DNA fragment. In transcription, TFIIH has an essential role in transcription initiation. When the pre-initiation complex (PIC) has been established, TFIIH is required for promoter opening and promoter escape. Phosphorylation of the C-terminal tail (CTD) of the largest subunit of RNA polymerase II by the kinase module TFIIK controls the initiation of transcription. This Saccharomyces cerevisiae (strain ATCC 204508 / S288c) (Baker's yeast) protein is General transcription and DNA repair factor IIH subunit SSL1 (SSL1).